The primary structure comprises 361 residues: UDP-N-acetylglucosamine--N-acetylmuramyl-(pentapeptide) pyrophosphoryl-undecaprenol N-acetylglucosamine transferase (361 aa).

Residues 13–15 (TGG), asparagine 125, arginine 167, serine 196, isoleucine 251, 270–275 (ALTVTE), and glutamine 296 each bind UDP-N-acetyl-alpha-D-glucosamine.

The protein belongs to the glycosyltransferase 28 family. MurG subfamily.

It is found in the cell inner membrane. The catalysed reaction is di-trans,octa-cis-undecaprenyl diphospho-N-acetyl-alpha-D-muramoyl-L-alanyl-D-glutamyl-meso-2,6-diaminopimeloyl-D-alanyl-D-alanine + UDP-N-acetyl-alpha-D-glucosamine = di-trans,octa-cis-undecaprenyl diphospho-[N-acetyl-alpha-D-glucosaminyl-(1-&gt;4)]-N-acetyl-alpha-D-muramoyl-L-alanyl-D-glutamyl-meso-2,6-diaminopimeloyl-D-alanyl-D-alanine + UDP + H(+). The protein operates within cell wall biogenesis; peptidoglycan biosynthesis. Cell wall formation. Catalyzes the transfer of a GlcNAc subunit on undecaprenyl-pyrophosphoryl-MurNAc-pentapeptide (lipid intermediate I) to form undecaprenyl-pyrophosphoryl-MurNAc-(pentapeptide)GlcNAc (lipid intermediate II). This is UDP-N-acetylglucosamine--N-acetylmuramyl-(pentapeptide) pyrophosphoryl-undecaprenol N-acetylglucosamine transferase from Psychrobacter arcticus (strain DSM 17307 / VKM B-2377 / 273-4).